A 731-amino-acid chain; its full sequence is Pre-B-cell leukemia transcription factor-interacting protein 1 (731 aa).

Polar residues predominate over residues Met1–Ser10. The disordered stretch occupies residues Met1–Asp155. Ser43 carries the phosphoserine modification. 2 stretches are compositionally biased toward polar residues: residues Leu62–Thr75 and Leu121–Ser132. Phosphoserine occurs at positions 129, 146, 147, and 148. A Phosphothreonine modification is found at Thr152. A coiled-coil region spans residues Leu270–Gly348. Disordered stretches follow at residues Leu354 to Glu377, Gly447 to Pro572, and Leu698 to Gly731. Residues Lys364–Glu375 are compositionally biased toward basic and acidic residues. Residues Glu377–Gln417 adopt a coiled-coil conformation. 3 stretches are compositionally biased toward basic and acidic residues: residues Trp472–Arg499, Gln508–Arg543, and Ser551–Asp569. Residues Arg485–Trp505 carry the Nuclear localization signal motif. Position 567 is a phosphoserine (Ser567). The Nuclear localization signal signature appears at Asp695–Gly720. Residues Leu698–Lys707 show a composition bias toward basic residues.

Interacts with TEX11. Interacts with ESR1, PBX1, PBX2 and PBX3. In terms of tissue distribution, expressed in early hematopoietic precursors.

Its subcellular location is the cytoplasm. The protein localises to the cytoskeleton. It is found in the nucleus. Functionally, regulator of pre-B-cell leukemia transcription factors (BPXs) function. Inhibits the binding of PBX1-HOX complex to DNA and blocks the transcriptional activity of E2A-PBX1. Tethers estrogen receptor-alpha (ESR1) to microtubules and allows them to influence estrogen receptors-alpha signaling. The sequence is that of Pre-B-cell leukemia transcription factor-interacting protein 1 (PBXIP1) from Homo sapiens (Human).